Reading from the N-terminus, the 586-residue chain is Transmembrane protease serine 13 (586 aa).

Disordered regions lie at residues 1–115 (MERD…VTTS) and 131–157 (PIRS…LPKF). Residues 1 to 165 (MERDSHGNAS…KFTWREGQKQ (165 aa)) lie on the Cytoplasmic side of the membrane. Residues 9–13 (ASPAR) form a 1-1 repeat. The tract at residues 9-93 (ASPARTPSAG…ASPARASPAL (85 aa)) is 13 X 5 AA repeats of A-S-P-A-[GLQR]. One copy of the 2-1; approximate repeat lies at 14 to 18 (TPSAG). A compositionally biased stretch (low complexity) spans 14-52 (TPSAGASPAQASPAGTPPGRASPAQASPAQASPAGTPPG). The segment at 14-68 (TPSAGASPAQASPAGTPPGRASPAQASPAQASPAGTPPGRASPAQASPAGTPPGR) is 4 X 5 AA repeats of T-P-P-G-R. Repeat copies occupy residues 19-23 (ASPAQ), 24-28 (ASPAG), 29-33 (TPPGR), 34-38 (ASPAQ), 39-43 (ASPAQ), 44-48 (ASPAG), 49-53 (TPPGR), 54-58 (ASPAQ), 59-63 (ASPAG), and 64-68 (TPPGR). A 1-9; approximate repeat occupies 69-78 (ASPGRASPAQ). Low complexity-rich tracts occupy residues 69–111 (ASPG…RSAS) and 133–144 (RSSPARSAPATR). Repeat copies occupy residues 79-83 (ASPAQ), 84-88 (ASPAR), and 89-93 (ASPAL). Residues 166-186 (LPLIGCVLLLIALVVSLIILF) traverse the membrane as a helical; Signal-anchor for type II membrane protein segment. At 187–586 (QFWQGHTGIR…GGDPGGAPRL (400 aa)) the chain is on the extracellular side. In terms of domain architecture, SRCR spans 195–325 (IRYKEQRESC…HCGLRAMTGR (131 aa)). Residues 204–226 (CPKHAVRCDGVVDCKLKSDELGC) form the LDL-receptor class A domain. 3 cysteine pairs are disulfide-bonded: cysteine 250-cysteine 314, cysteine 263-cysteine 317, and cysteine 351-cysteine 367. N-linked (GlcNAc...) asparagine glycans are attached at residues asparagine 255 and asparagine 292. In terms of domain architecture, Peptidase S1 spans 326–559 (IVGGALASDS…VLPWIYSKME (234 aa)). Histidine 366 acts as the Charge relay system in catalysis. Residue asparagine 405 is glycosylated (N-linked (GlcNAc...) asparagine). Residue aspartate 414 is the Charge relay system of the active site. Asparagine 445 is a glycosylation site (N-linked (GlcNAc...) asparagine). 3 disulfide bridges follow: cysteine 448/cysteine 517, cysteine 480/cysteine 496, and cysteine 507/cysteine 535. The active-site Charge relay system is the serine 511. Residues 565-574 (QDTAPSRLGT) are compositionally biased toward polar residues. A disordered region spans residues 565 to 586 (QDTAPSRLGTSSGGDPGGAPRL). Positions 575-586 (SSGGDPGGAPRL) are enriched in gly residues.

This sequence belongs to the peptidase S1 family. Interacts with SPINT1/HAI-1; the interaction promotes the phosphorylation and cell membrane localization of TMPRSS13. Interacts with SPINT2/HAI-2; the interaction promotes the phosphorylation and cell membrane localization of TMPRSS13. The inactive zymogen is post-translationally modified and then trafficked to the cell surface, whereby it undergoes autocatalytic cleavage resulting in an activated form that is released extracellularly. In terms of processing, phosphorylation is required for localization at the cell surface. Phosphorylation increases following inhibition of protease activity by SPINT2/HAI-2. Post-translationally, N-glycosylation of Asn-405 and Asn-445 is required for exit from the endoplasmic reticulum and trafficking to the cell surface. Also required for autocleavage of the zymogen, activation and secretion of the mature protein. Expressed in placenta. In terms of tissue distribution, predominantly expressed in lung, placenta, pancreas, and prostate. As to expression, expressed in lung, placenta, pancreas, and prostate. Weakly expressed in testis and peripheral blood lymphocytes.

The protein localises to the cell membrane. Its subcellular location is the secreted. It is found in the cytoplasm. Its activity is regulated as follows. Cleavage of HGF is inhibited by SPINT1/HAI-1 via the BPTI/Kunitz inhibitor 1 domain. Its function is as follows. Serine protease. Cleaves the proform of PRSS8/prostasin to form the active protein. Cleaves the proform of HGF to form the active protein which promotes MAPK signaling. Promotes the formation of the stratum corneum and subsequently the epidermal barrier in embryos. In Homo sapiens (Human), this protein is Transmembrane protease serine 13 (TMPRSS13).